An 827-amino-acid polypeptide reads, in one-letter code: Periplasmic nitrate reductase (827 aa).

A signal peptide (tat-type signal) is located at residues 1 to 32 (MNLSRRDFMKANAALAAASVAGLIIPVKNVNA). The 57-residue stretch at 37–93 (ITWDKAVCRFCGTGCAVLVGTKDGRVVASQGDPDAEVNRGLNCIKGYFLPKIMYGKD) folds into the 4Fe-4S Mo/W bis-MGD-type domain. Cys44, Cys47, Cys51, and Cys79 together coordinate [4Fe-4S] cluster. Residues Lys81, Gln148, Asn173, Cys177, 210–217 (WGSNMAEM), 242–246 (STFEH), 261–263 (QSD), Met372, Gln376, Asn482, 508–509 (SD), Lys531, Asp558, and 717–726 (TGRILEHWHT) contribute to the Mo-bis(molybdopterin guanine dinucleotide) site. Phe793 is a substrate binding site. Residues Asn801 and Lys818 each contribute to the Mo-bis(molybdopterin guanine dinucleotide) site.

Belongs to the prokaryotic molybdopterin-containing oxidoreductase family. NasA/NapA/NarB subfamily. As to quaternary structure, component of the periplasmic nitrate reductase NapAB complex composed of NapA and NapB. [4Fe-4S] cluster is required as a cofactor. The cofactor is Mo-bis(molybdopterin guanine dinucleotide). Predicted to be exported by the Tat system. The position of the signal peptide cleavage has not been experimentally proven.

The protein localises to the periplasm. The enzyme catalyses 2 Fe(II)-[cytochrome] + nitrate + 2 H(+) = 2 Fe(III)-[cytochrome] + nitrite + H2O. Its function is as follows. Catalytic subunit of the periplasmic nitrate reductase complex NapAB. Receives electrons from NapB and catalyzes the reduction of nitrate to nitrite. This is Periplasmic nitrate reductase from Histophilus somni (strain 2336) (Haemophilus somnus).